The sequence spans 81 residues: Metallocarboxypeptidase inhibitor (81 aa).

The N-terminal stretch at 1–15 (MFLLVFLCCLHLVIS) is a signal peptide. 4 disulfides stabilise this stretch: cysteine 25/cysteine 48, cysteine 32/cysteine 76, cysteine 33/cysteine 57, and cysteine 36/cysteine 72.

In terms of biological role, tightly binding, competitive inhibitor of different types of pancreatic-like carboxypeptidases. Inhibits human CPA4. The chain is Metallocarboxypeptidase inhibitor from Hirudo medicinalis (Medicinal leech).